The chain runs to 778 residues: Pentatricopeptide repeat-containing protein At3g09650, chloroplastic (778 aa).

The N-terminal 65 residues, 1-65 (MNILRPPTSS…RSASGTANSS (65 aa)), are a transit peptide targeting the chloroplast. PPR repeat units lie at residues 235–269 (DTAA…DCEP), 270–304 (DVLT…GIKV), and 305–339 (CMTT…RRDL). Residues 351–381 (LKEKEEEEAEDDEDAFEDDEDSGYSARDEVS) form a disordered region. A compositionally biased stretch (acidic residues) spans 355–372 (EEEEAEDDEDAFEDDEDS). PPR repeat units follow at residues 413-443 (DSRI…MRRQ), 451-485 (DEVT…GVPA), 486-521 (NRIT…GIEP), 522-556 (DVVS…GIAP), 557-587 (TKIS…MMND), 593-627 (DLIA…GFYP), and 628-658 (NVAT…IKER).

Belongs to the PPR family. P subfamily.

It is found in the plastid. The protein resides in the chloroplast stroma. Its function is as follows. Involved in the processing of polycistronic chloroplast psbB-psbT-psbH-petB-petD transcript. Could bind RNA. This chain is Pentatricopeptide repeat-containing protein At3g09650, chloroplastic (HCF152), found in Arabidopsis thaliana (Mouse-ear cress).